Reading from the N-terminus, the 483-residue chain is Membrane-bound lytic murein transglycosylase F (483 aa).

Positions 1-18 (MKGLVIRISVALALLLWA) are cleaved as a signal peptide. The interval 19-270 (VDMVFPWQQI…RIEEKYFSHI (252 aa)) is non-LT domain. The tract at residues 272–483 (QFDYVDIKSY…IMITPQNSQD (212 aa)) is LT domain. Glu-315 is an active-site residue.

This sequence in the N-terminal section; belongs to the bacterial solute-binding protein 3 family. It in the C-terminal section; belongs to the transglycosylase Slt family.

Its subcellular location is the cell outer membrane. It carries out the reaction Exolytic cleavage of the (1-&gt;4)-beta-glycosidic linkage between N-acetylmuramic acid (MurNAc) and N-acetylglucosamine (GlcNAc) residues in peptidoglycan, from either the reducing or the non-reducing ends of the peptidoglycan chains, with concomitant formation of a 1,6-anhydrobond in the MurNAc residue.. Functionally, murein-degrading enzyme that degrades murein glycan strands and insoluble, high-molecular weight murein sacculi, with the concomitant formation of a 1,6-anhydromuramoyl product. Lytic transglycosylases (LTs) play an integral role in the metabolism of the peptidoglycan (PG) sacculus. Their lytic action creates space within the PG sacculus to allow for its expansion as well as for the insertion of various structures such as secretion systems and flagella. This Actinobacillus succinogenes (strain ATCC 55618 / DSM 22257 / CCUG 43843 / 130Z) protein is Membrane-bound lytic murein transglycosylase F.